A 217-amino-acid polypeptide reads, in one-letter code: UPF0319 protein VP1009 (217 aa).

The first 21 residues, 1 to 21, serve as a signal peptide directing secretion; that stretch reads MRLKTWIVAFFLGLFGTTVNA.

The protein belongs to the UPF0319 family.

The chain is UPF0319 protein VP1009 from Vibrio parahaemolyticus serotype O3:K6 (strain RIMD 2210633).